Reading from the N-terminus, the 101-residue chain is Integration host factor subunit alpha (101 aa).

The segment at 49–70 is disordered; the sequence is FGNFQLRDKPQRPGRNPKTGEE.

Belongs to the bacterial histone-like protein family. As to quaternary structure, heterodimer of an alpha and a beta chain.

Functionally, this protein is one of the two subunits of integration host factor, a specific DNA-binding protein that functions in genetic recombination as well as in transcriptional and translational control. The protein is Integration host factor subunit alpha of Nitrosospira multiformis (strain ATCC 25196 / NCIMB 11849 / C 71).